The sequence spans 217 residues: 3,4-dihydroxy-2-butanone 4-phosphate synthase (217 aa).

Residues 37 to 38, aspartate 42, 150 to 154, and glutamate 174 each bind D-ribulose 5-phosphate; these read RE and RRGHT. Glutamate 38 serves as a coordination point for Mg(2+). Residue histidine 153 coordinates Mg(2+).

This sequence belongs to the DHBP synthase family. In terms of assembly, homodimer. The cofactor is Mg(2+). It depends on Mn(2+) as a cofactor.

It catalyses the reaction D-ribulose 5-phosphate = (2S)-2-hydroxy-3-oxobutyl phosphate + formate + H(+). It participates in cofactor biosynthesis; riboflavin biosynthesis; 2-hydroxy-3-oxobutyl phosphate from D-ribulose 5-phosphate: step 1/1. Functionally, catalyzes the conversion of D-ribulose 5-phosphate to formate and 3,4-dihydroxy-2-butanone 4-phosphate. This Shewanella sp. (strain W3-18-1) protein is 3,4-dihydroxy-2-butanone 4-phosphate synthase.